Here is a 388-residue protein sequence, read N- to C-terminus: UDP-4-amino-4-deoxy-L-arabinose--oxoglutarate aminotransferase (388 aa).

An N6-(pyridoxal phosphate)lysine modification is found at K183.

The protein belongs to the DegT/DnrJ/EryC1 family. ArnB subfamily. Homodimer. Requires pyridoxal 5'-phosphate as cofactor.

The catalysed reaction is UDP-4-amino-4-deoxy-beta-L-arabinose + 2-oxoglutarate = UDP-beta-L-threo-pentopyranos-4-ulose + L-glutamate. It participates in nucleotide-sugar biosynthesis; UDP-4-deoxy-4-formamido-beta-L-arabinose biosynthesis; UDP-4-deoxy-4-formamido-beta-L-arabinose from UDP-alpha-D-glucuronate: step 2/3. The protein operates within bacterial outer membrane biogenesis; lipopolysaccharide biosynthesis. Its function is as follows. Catalyzes the conversion of UDP-4-keto-arabinose (UDP-Ara4O) to UDP-4-amino-4-deoxy-L-arabinose (UDP-L-Ara4N). The modified arabinose is attached to lipid A and is required for resistance to polymyxin and cationic antimicrobial peptides. The sequence is that of UDP-4-amino-4-deoxy-L-arabinose--oxoglutarate aminotransferase from Shewanella sediminis (strain HAW-EB3).